Here is a 188-residue protein sequence, read N- to C-terminus: ATP synthase subunit b (188 aa).

The chain crosses the membrane as a helical span at residues 30 to 50; sequence IVWSLIPFLIILIVFWKLVLP.

This sequence belongs to the ATPase B chain family. In terms of assembly, F-type ATPases have 2 components, F(1) - the catalytic core - and F(0) - the membrane proton channel. F(1) has five subunits: alpha(3), beta(3), gamma(1), delta(1), epsilon(1). F(0) has three main subunits: a(1), b(2) and c(10-14). The alpha and beta chains form an alternating ring which encloses part of the gamma chain. F(1) is attached to F(0) by a central stalk formed by the gamma and epsilon chains, while a peripheral stalk is formed by the delta and b chains.

The protein resides in the cell membrane. F(1)F(0) ATP synthase produces ATP from ADP in the presence of a proton or sodium gradient. F-type ATPases consist of two structural domains, F(1) containing the extramembraneous catalytic core and F(0) containing the membrane proton channel, linked together by a central stalk and a peripheral stalk. During catalysis, ATP synthesis in the catalytic domain of F(1) is coupled via a rotary mechanism of the central stalk subunits to proton translocation. Its function is as follows. Component of the F(0) channel, it forms part of the peripheral stalk, linking F(1) to F(0). In Corynebacterium glutamicum (strain R), this protein is ATP synthase subunit b.